Here is a 156-residue protein sequence, read N- to C-terminus: Oxidized purine nucleoside triphosphate hydrolase (156 aa).

Residues 3-132 (TSKLLTLVLV…WFPLMLQKKR (130 aa)) form the Nudix hydrolase domain. Thr8 contributes to the 2-oxo-dATP binding site. O(6)-methyl-dGMP-binding positions include Thr8, Lys23, Asn33, and 35–38 (FGGK). Lys23 serves as a coordination point for 8-oxo-dGTP. 2-oxo-dATP contacts are provided by residues Asn33 and 35-38 (FGGK). Gly36, Glu52, Glu55, Glu56, and Glu100 together coordinate Mg(2+). The Nudix box motif lies at 37–58 (GKVQTGETIEQAARRELLEESG). 117 to 120 (WADD) serves as a coordination point for 2-oxo-dATP. 117–120 (WADD) lines the O(6)-methyl-dGMP pocket.

It belongs to the Nudix hydrolase family. As to quaternary structure, monomer. Mg(2+) is required as a cofactor.

It is found in the cytoplasm. It localises to the cytosol. Its subcellular location is the mitochondrion matrix. The protein resides in the nucleus. The catalysed reaction is 2-oxo-dATP + H2O = 2-oxo-dAMP + diphosphate + H(+). It carries out the reaction 2-oxo-ATP + H2O = 2-oxo-AMP + diphosphate + H(+). The enzyme catalyses 8-oxo-dGTP + H2O = 8-oxo-dGMP + diphosphate + H(+). It catalyses the reaction 8-oxo-dATP + H2O = 8-oxo-dAMP + diphosphate + H(+). The catalysed reaction is O(6)-methyl-dGTP + H2O = O(6)-methyl-dGMP + diphosphate + H(+). It carries out the reaction N(6)-methyl-dATP + H2O = N(6)-methyl-dAMP + diphosphate + H(+). The enzyme catalyses N(6)-methyl-ATP + H2O = N(6)-methyl-AMP + diphosphate + H(+). Inhibited by TH588. Oxidized purine nucleoside triphosphate hydrolase which is a prominent sanitizer of the oxidized nucleotide pool. Catalyzes the hydrolysis of 2-oxo-dATP (2-hydroxy-dATP) into 2-oxo-dAMP. Also has a significant hydrolase activity toward 2-oxo-ATP, 8-oxo-dGTP and 8-oxo-dATP. Through the hydrolysis of oxidized purine nucleoside triphosphates, prevents their incorporation into DNA and the subsequent transversions A:T to C:G and G:C to T:A. Also catalyzes the hydrolysis of methylated purine nucleoside triphosphate preventing their integration into DNA. Through this antimutagenic activity protects cells from oxidative stress. This Danio rerio (Zebrafish) protein is Oxidized purine nucleoside triphosphate hydrolase (nudt1).